The sequence spans 181 residues: Dehydration-responsive element-binding protein 1E (181 aa).

The Nuclear localization signal motif lies at 14 to 26; sequence KKRAGRRIFKETR. The segment at residues 29-86 is a DNA-binding region (AP2/ERF); the sequence is IYRGVRRRDGDKWVCEVREPIHQRRVWLGTYPTADMAARAHDVAVLALRGRSACLNFS.

This sequence belongs to the AP2/ERF transcription factor family. ERF subfamily.

It is found in the nucleus. Transcriptional activator that binds specifically to the DNA sequence 5'-[AG]CCGAC-3'. Binding to the C-repeat/DRE element mediates cold or dehydration-inducible transcription. CBF/DREB1 factors play a key role in freezing tolerance and cold acclimation. This Arabidopsis thaliana (Mouse-ear cress) protein is Dehydration-responsive element-binding protein 1E (DREB1E).